A 479-amino-acid chain; its full sequence is Inhibitory synaptic factor 2A (479 aa).

Residue S177 is modified to Phosphoserine. 2 disordered regions span residues 226 to 247 and 315 to 338; these read GRAK…ALRR and SPEC…PSPT. Residues 228 to 237 are compositionally biased toward basic and acidic residues; it reads AKQDRGRPNS. Polar residues predominate over residues 318–337; sequence CSEQPSQTHTPPGLGNQPSP. Positions 353–379 form a coiled coil; that stretch reads TEVVDLKAQLQMMENLISSSQETIKVL. The span at 449 to 461 shows a compositional bias: polar residues; that stretch reads SPYSQETYSSTPK. Residues 449–472 form a disordered region; that stretch reads SPYSQETYSSTPKQKSKTESKKHG.

The protein belongs to the INSYN2 family. Interacts with GPHN.

The protein localises to the postsynaptic density. Its function is as follows. Component of the protein machinery at the inhibitory synapses, probably acting as a scaffold. Inhibitory synapses dampen neuronal activity through postsynaptic hyperpolarization. This synaptic inhibition is fundamental for the functioning of the central nervous system, shaping and orchestrating the flow of information through neuronal networks to generate a precise neural code. This chain is Inhibitory synaptic factor 2A, found in Homo sapiens (Human).